The chain runs to 122 residues: Large ribosomal subunit protein uL14 (122 aa).

The protein belongs to the universal ribosomal protein uL14 family. Part of the 50S ribosomal subunit. Forms a cluster with proteins L3 and L19. In the 70S ribosome, L14 and L19 interact and together make contacts with the 16S rRNA in bridges B5 and B8.

Functionally, binds to 23S rRNA. Forms part of two intersubunit bridges in the 70S ribosome. The polypeptide is Large ribosomal subunit protein uL14 (Clostridioides difficile (strain 630) (Peptoclostridium difficile)).